We begin with the raw amino-acid sequence, 251 residues long: Adenosylcobinamide-GDP ribazoletransferase (251 aa).

6 helical membrane-spanning segments follow: residues 29–49 (FAGMSRWAPIVGLILGLILAV), 65–85 (SLLIVLLAIALTGGLHLDGAM), 110–130 (AFGAIAAIAIISLKTIALCYL), 136–156 (LLILLIPVWGRWAQVLAIVRY), 175–195 (AIDLLPGAIALVLGIGAIARF), and 198–218 (LTVALQLLAIGLLWAWATGAW).

Belongs to the CobS family. It depends on Mg(2+) as a cofactor.

It localises to the cell inner membrane. It catalyses the reaction alpha-ribazole + adenosylcob(III)inamide-GDP = adenosylcob(III)alamin + GMP + H(+). The catalysed reaction is alpha-ribazole 5'-phosphate + adenosylcob(III)inamide-GDP = adenosylcob(III)alamin 5'-phosphate + GMP + H(+). The protein operates within cofactor biosynthesis; adenosylcobalamin biosynthesis; adenosylcobalamin from cob(II)yrinate a,c-diamide: step 7/7. Its function is as follows. Joins adenosylcobinamide-GDP and alpha-ribazole to generate adenosylcobalamin (Ado-cobalamin). Also synthesizes adenosylcobalamin 5'-phosphate from adenosylcobinamide-GDP and alpha-ribazole 5'-phosphate. The sequence is that of Adenosylcobinamide-GDP ribazoletransferase from Synechococcus elongatus (strain ATCC 33912 / PCC 7942 / FACHB-805) (Anacystis nidulans R2).